A 603-amino-acid chain; its full sequence is Aquaporin-2 (603 aa).

A helical transmembrane segment spans residues 40–70; sequence SLKKYKYNLFFEFIGSFLFVFFISIYMLNSN. Composition is skewed to basic and acidic residues over residues 135–149 and 156–190; these read NNKS…DDKI and EFEK…EDPK. Positions 135-200 are disordered; it reads NNKSKREVER…NISNKNENYD (66 aa). Residues 191–200 are compositionally biased toward polar residues; the sequence is NISNKNENYD. 5 helical membrane passes run 282–299, 321–346, 360–393, 442–471, and 509–542; these read HAIY…FILL, FALS…AHLY, IIKT…EENK, NKYI…VTNT, and ITKI…FLSL.

Belongs to the MIP/aquaporin (TC 1.A.8) family.

The protein resides in the endomembrane system. The enzyme catalyses H2O(in) = H2O(out). It carries out the reaction glycerol(in) = glycerol(out). Its function is as follows. Required for sporozoite development in the mosquito vector. The chain is Aquaporin-2 from Plasmodium falciparum (isolate NF54).